Consider the following 454-residue polypeptide: Bifunctional protein GlmU (454 aa).

Positions 1-233 (MTNRTCLAVI…RESAVGINNR (233 aa)) are pyrophosphorylase. Residues 11 to 14 (LAAG), Lys25, Gln79, and 84 to 85 (GT) each bind UDP-N-acetyl-alpha-D-glucosamine. Asp109 lines the Mg(2+) pocket. Positions 145, 159, 174, and 231 each coordinate UDP-N-acetyl-alpha-D-glucosamine. Mg(2+) is bound at residue Asn231. The tract at residues 234–254 (AELAEAEAVWQQKRRRELMLS) is linker. The N-acetyltransferase stretch occupies residues 255–454 (GVTLIAPETV…AEEKAKKSGG (200 aa)). Residues Arg320 and Lys338 each coordinate UDP-N-acetyl-alpha-D-glucosamine. His350 functions as the Proton acceptor in the catalytic mechanism. Positions 353 and 364 each coordinate UDP-N-acetyl-alpha-D-glucosamine. Acetyl-CoA contacts are provided by residues Ala367, 373-374 (NY), Ser410, and Arg427.

It in the N-terminal section; belongs to the N-acetylglucosamine-1-phosphate uridyltransferase family. In the C-terminal section; belongs to the transferase hexapeptide repeat family. Homotrimer. Mg(2+) serves as cofactor.

The protein resides in the cytoplasm. The enzyme catalyses alpha-D-glucosamine 1-phosphate + acetyl-CoA = N-acetyl-alpha-D-glucosamine 1-phosphate + CoA + H(+). The catalysed reaction is N-acetyl-alpha-D-glucosamine 1-phosphate + UTP + H(+) = UDP-N-acetyl-alpha-D-glucosamine + diphosphate. It participates in nucleotide-sugar biosynthesis; UDP-N-acetyl-alpha-D-glucosamine biosynthesis; N-acetyl-alpha-D-glucosamine 1-phosphate from alpha-D-glucosamine 6-phosphate (route II): step 2/2. The protein operates within nucleotide-sugar biosynthesis; UDP-N-acetyl-alpha-D-glucosamine biosynthesis; UDP-N-acetyl-alpha-D-glucosamine from N-acetyl-alpha-D-glucosamine 1-phosphate: step 1/1. It functions in the pathway bacterial outer membrane biogenesis; LPS lipid A biosynthesis. Functionally, catalyzes the last two sequential reactions in the de novo biosynthetic pathway for UDP-N-acetylglucosamine (UDP-GlcNAc). The C-terminal domain catalyzes the transfer of acetyl group from acetyl coenzyme A to glucosamine-1-phosphate (GlcN-1-P) to produce N-acetylglucosamine-1-phosphate (GlcNAc-1-P), which is converted into UDP-GlcNAc by the transfer of uridine 5-monophosphate (from uridine 5-triphosphate), a reaction catalyzed by the N-terminal domain. This chain is Bifunctional protein GlmU, found in Chelativorans sp. (strain BNC1).